A 145-amino-acid chain; its full sequence is D-aminoacyl-tRNA deacylase (145 aa).

The Gly-cisPro motif, important for rejection of L-amino acids motif lies at 137–138 (GP).

Belongs to the DTD family. Homodimer.

It localises to the cytoplasm. It carries out the reaction glycyl-tRNA(Ala) + H2O = tRNA(Ala) + glycine + H(+). The enzyme catalyses a D-aminoacyl-tRNA + H2O = a tRNA + a D-alpha-amino acid + H(+). An aminoacyl-tRNA editing enzyme that deacylates mischarged D-aminoacyl-tRNAs. Also deacylates mischarged glycyl-tRNA(Ala), protecting cells against glycine mischarging by AlaRS. Acts via tRNA-based rather than protein-based catalysis; rejects L-amino acids rather than detecting D-amino acids in the active site. By recycling D-aminoacyl-tRNA to D-amino acids and free tRNA molecules, this enzyme counteracts the toxicity associated with the formation of D-aminoacyl-tRNA entities in vivo and helps enforce protein L-homochirality. This Photobacterium profundum (strain SS9) protein is D-aminoacyl-tRNA deacylase.